A 1020-amino-acid chain; its full sequence is Retinoblastoma-related protein (1020 aa).

Polar residues-rich tracts occupy residues 382–391 (SPTKTITSPL) and 398–409 (ASHTNGILGSTN). Residues 382-409 (SPTKTITSPLSPHRSPASHTNGILGSTN) are disordered. Residues 415–616 (TPVSTAMTTA…EKGSSMYNSL (202 aa)) form a domain A region. The tract at residues 415–869 (TPVSTAMTTA…NEIFIPAAKP (455 aa)) is pocket. Residues 617–737 (TVARPSLSAE…PGGGGETCAE (121 aa)) are spacer. Positions 738–869 (TGINIFFSKI…NEIFIPAAKP (132 aa)) are domain B.

The protein belongs to the retinoblastoma protein (RB) family.

Its subcellular location is the nucleus. In terms of biological role, regulator of biological processes that recruits a histone deacetylase to control gene transcription. May play a role in the entry into mitosis, negatively regulating the cell proliferation. Formation of stable complexes with geminiviridae replication-associated proteins may create a cellular environment which favors viral DNA replication. In Ricinus communis (Castor bean), this protein is Retinoblastoma-related protein (RBR).